Here is a 399-residue protein sequence, read N- to C-terminus: Formate-dependent phosphoribosylglycinamide formyltransferase (399 aa).

N(1)-(5-phospho-beta-D-ribosyl)glycinamide is bound by residues 22–23 and Glu-82; that span reads EL. ATP contacts are provided by residues Arg-115, Lys-157, 162-167, 197-200, and Glu-205; these read SSGKGQ and EAVV. The region spanning 120–315 is the ATP-grasp domain; that stretch reads RLAAEELGLQ…EFELHARAIL (196 aa). Residues Glu-274 and Glu-286 each coordinate Mg(2+). N(1)-(5-phospho-beta-D-ribosyl)glycinamide-binding positions include Asp-293, Lys-362, and 369–370; that span reads RR.

Belongs to the PurK/PurT family. Homodimer.

The enzyme catalyses N(1)-(5-phospho-beta-D-ribosyl)glycinamide + formate + ATP = N(2)-formyl-N(1)-(5-phospho-beta-D-ribosyl)glycinamide + ADP + phosphate + H(+). It participates in purine metabolism; IMP biosynthesis via de novo pathway; N(2)-formyl-N(1)-(5-phospho-D-ribosyl)glycinamide from N(1)-(5-phospho-D-ribosyl)glycinamide (formate route): step 1/1. Involved in the de novo purine biosynthesis. Catalyzes the transfer of formate to 5-phospho-ribosyl-glycinamide (GAR), producing 5-phospho-ribosyl-N-formylglycinamide (FGAR). Formate is provided by PurU via hydrolysis of 10-formyl-tetrahydrofolate. The polypeptide is Formate-dependent phosphoribosylglycinamide formyltransferase (Thioalkalivibrio sulfidiphilus (strain HL-EbGR7)).